The following is a 76-amino-acid chain: Conotoxin Cal29b (76 aa).

Residues 1-43 (MKLTCVLIVAVLILAACQFTAANMARYGKTQIARSDVKSIDAR) form the signal peptide.

It belongs to the conotoxin O1 superfamily. Post-translationally, may contain 4 disulfide bonds. As to expression, expressed by the venom duct.

It is found in the secreted. Is able to inhibit the growth of Mycobacterium tuberculosis (MIC=0.22-3.52 uM against strain H37Rv and 2 multidrug-resistant strains). May also show neurotoxic activity. In Californiconus californicus (California cone), this protein is Conotoxin Cal29b.